The chain runs to 410 residues: Pectate lyase PEL9 (410 aa).

A signal peptide spans 1–18 (MMGKSVWVFAALFPAVLA). Ca(2+)-binding residues include D191, D215, D216, and D219. An N-linked (GlcNAc...) asparagine glycan is attached at N234. K271 acts as the Proton acceptor in catalysis. Residues 342–351 (GEAPTSLSDE) are compositionally biased toward polar residues. Disordered regions lie at residues 342 to 361 (GEAPTSLSDEQISDGNSWDG) and 381 to 410 (ERNADGTIEPSGFLLPADGEEIGATTDWSA).

The protein belongs to the polysaccharide lyase 9 family. Ca(2+) serves as cofactor.

Its subcellular location is the secreted. It carries out the reaction Eliminative cleavage of (1-&gt;4)-alpha-D-galacturonan to give oligosaccharides with 4-deoxy-alpha-D-galact-4-enuronosyl groups at their non-reducing ends.. Inhibited by iron ions. Activated in presence of the surfactant polysorbate 20, while inhibited in the presence of Triton X-100 and sodium dodecyl sulfate. Inhibited in presence of the organic solvents methanol, ethanol, propan-2-ol and acetone. Its function is as follows. Presents an endo-cleaving activity on the homogalacturonan (HG) region in pectin. Active on homogalacturonan with a degree of polymerization above 4, and does not appear to be affected by the degree of methylation of the substrate. Does not degrade linear rhamnogalacturonan. This is Pectate lyase PEL9 from Emericella nidulans (strain FGSC A4 / ATCC 38163 / CBS 112.46 / NRRL 194 / M139) (Aspergillus nidulans).